Here is a 322-residue protein sequence, read N- to C-terminus: UV DNA damage endonuclease (322 aa).

It belongs to the uve1/UvsE family.

In terms of biological role, component in a DNA repair pathway. Removal of UV LIGHT damaged nucleotides. Recognizes pyrimidine dimers and cleave a phosphodiester bond immediately 5' to the lesion. The chain is UV DNA damage endonuclease from Nostoc sp. (strain PCC 7120 / SAG 25.82 / UTEX 2576).